Consider the following 377-residue polypeptide: Protein MULTIPOLAR SPINDLE 1 (377 aa).

Positions 117–124 match the Nuclear localization signal motif; that stretch reads LRRRFLRL.

As to expression, expressed in roots, stems, leaves, inflorescences and seedlings. Strongly expressed in meiocytes.

The protein localises to the nucleus. It is found in the cytoplasm. The protein resides in the cytoskeleton. It localises to the spindle. Involved in meiotic spindle organization in meiocytes thus regulating chromosome segregation. Required for formation of meiotic DNA double-strand breaks (DSBs) during early recombination processes. The polypeptide is Protein MULTIPOLAR SPINDLE 1 (Arabidopsis thaliana (Mouse-ear cress)).